A 431-amino-acid chain; its full sequence is Enolase (431 aa).

Residue Q167 participates in (2R)-2-phosphoglycerate binding. E209 serves as the catalytic Proton donor. Residues D246, E289, and D316 each coordinate Mg(2+). Residues K341, R370, S371, and K392 each contribute to the (2R)-2-phosphoglycerate site. Residue K341 is the Proton acceptor of the active site.

The protein belongs to the enolase family. As to quaternary structure, component of the RNA degradosome, a multiprotein complex involved in RNA processing and mRNA degradation. It depends on Mg(2+) as a cofactor.

It localises to the cytoplasm. Its subcellular location is the secreted. It is found in the cell surface. The catalysed reaction is (2R)-2-phosphoglycerate = phosphoenolpyruvate + H2O. It functions in the pathway carbohydrate degradation; glycolysis; pyruvate from D-glyceraldehyde 3-phosphate: step 4/5. Catalyzes the reversible conversion of 2-phosphoglycerate (2-PG) into phosphoenolpyruvate (PEP). It is essential for the degradation of carbohydrates via glycolysis. This is Enolase from Shewanella putrefaciens (strain CN-32 / ATCC BAA-453).